Here is a 312-residue protein sequence, read N- to C-terminus: 4-diphosphocytidyl-2-C-methyl-D-erythritol kinase (312 aa).

Lys-16 is a catalytic residue. 101 to 111 (PIGAGLAGGSS) contacts ATP. The active site involves Asp-143.

Belongs to the GHMP kinase family. IspE subfamily.

The catalysed reaction is 4-CDP-2-C-methyl-D-erythritol + ATP = 4-CDP-2-C-methyl-D-erythritol 2-phosphate + ADP + H(+). It functions in the pathway isoprenoid biosynthesis; isopentenyl diphosphate biosynthesis via DXP pathway; isopentenyl diphosphate from 1-deoxy-D-xylulose 5-phosphate: step 3/6. Its function is as follows. Catalyzes the phosphorylation of the position 2 hydroxy group of 4-diphosphocytidyl-2C-methyl-D-erythritol. The sequence is that of 4-diphosphocytidyl-2-C-methyl-D-erythritol kinase from Prochlorococcus marinus subsp. pastoris (strain CCMP1986 / NIES-2087 / MED4).